A 504-amino-acid polypeptide reads, in one-letter code: 2-isopropylmalate synthase (504 aa).

The region spanning 6-267 (IIIFDTTLRD…YTGIISKEIY (262 aa)) is the Pyruvate carboxyltransferase domain. Residues aspartate 15, histidine 201, histidine 203, and asparagine 237 each coordinate Mn(2+). A regulatory domain region spans residues 391-504 (EITDLLQSSG…LNSYLRIHKN (114 aa)).

Belongs to the alpha-IPM synthase/homocitrate synthase family. LeuA type 1 subfamily. As to quaternary structure, homodimer. Mn(2+) is required as a cofactor.

The protein localises to the cytoplasm. The catalysed reaction is 3-methyl-2-oxobutanoate + acetyl-CoA + H2O = (2S)-2-isopropylmalate + CoA + H(+). Its pathway is amino-acid biosynthesis; L-leucine biosynthesis; L-leucine from 3-methyl-2-oxobutanoate: step 1/4. Functionally, catalyzes the condensation of the acetyl group of acetyl-CoA with 3-methyl-2-oxobutanoate (2-ketoisovalerate) to form 3-carboxy-3-hydroxy-4-methylpentanoate (2-isopropylmalate). This chain is 2-isopropylmalate synthase, found in Campylobacter concisus (strain 13826).